Here is a 393-residue protein sequence, read N- to C-terminus: Argininosuccinate synthase (393 aa).

Residues alanine 7–serine 15 and alanine 34 contribute to the ATP site. Tyrosine 85 and serine 90 together coordinate L-citrulline. Glycine 115 lines the ATP pocket. L-aspartate is bound by residues threonine 117, asparagine 121, and aspartate 122. Residue asparagine 121 participates in L-citrulline binding. Positions 125, 176, 185, 261, and 273 each coordinate L-citrulline.

Belongs to the argininosuccinate synthase family. Type 1 subfamily. As to quaternary structure, homotetramer.

It is found in the cytoplasm. The enzyme catalyses L-citrulline + L-aspartate + ATP = 2-(N(omega)-L-arginino)succinate + AMP + diphosphate + H(+). It participates in amino-acid biosynthesis; L-arginine biosynthesis; L-arginine from L-ornithine and carbamoyl phosphate: step 2/3. The protein is Argininosuccinate synthase of Ehrlichia canis (strain Jake).